Consider the following 456-residue polypeptide: MNKFQGPVTLKDVIVEFTKEEWKLLTPAQRTLYKDVMLENYSHLVSVGYHVNKPNAVFKLKQGKEPWILEVEFPHRGFPEDLWSIHDLEARYQESQAGNSRNGELTKHQKTHTTEKACECKECGKFFCQKSALIVHQHTHSKGKSYDCDKCGKSFSKNEDLIRHQKIHTRDKTYECKECKKIFYHLSSLSRHLRTHAGEKPYECNQCEKSFYQKPHLTEHQKTHTGEKPFECTECGKFFYVKAYLMVHQKTHTGEKPYECKECGKAFSQKSHLTVHQRMHTGEKPYKCKECGKFFSRNSHLKTHQRSHTGEKPYECKECRKCFYQKSALTVHQRTHTGEKPFECNKCGKTFYYKSDLTKHQRKHTGEKPYECTECGKSFAVNSVLRLHQRTHTGEKPYACKECGKSFSQKSHFIIHQRKHTGEKPYECQECGETFIQKSQLTAHQKTHTKKRNAEK.

Residues 8–79 (VTLKDVIVEF…EVEFPHRGFP (72 aa)) enclose the KRAB domain. 12 consecutive C2H2-type zinc fingers follow at residues 118–140 (CECK…QHTH), 146–168 (YDCD…QKIH), 174–196 (YECK…LRTH), 202–224 (YECN…QKTH), 230–252 (FECT…QKTH), 258–280 (YECK…QRMH), 286–308 (YKCK…QRSH), 314–336 (YECK…QRTH), 342–364 (FECN…QRKH), 370–392 (YECT…QRTH), 398–420 (YACK…QRKH), and 426–448 (YECQ…QKTH).

Belongs to the krueppel C2H2-type zinc-finger protein family.

It localises to the nucleus. Its function is as follows. May be involved in transcriptional regulation. The protein is Zinc finger protein 25 (ZNF25) of Homo sapiens (Human).